We begin with the raw amino-acid sequence, 492 residues long: Cytochrome P450 monooxygenase rdc4 (492 aa).

C435 contacts heme.

Belongs to the cytochrome P450 family. Heme is required as a cofactor.

It functions in the pathway secondary metabolite biosynthesis. Its function is as follows. Cytochrome P450 monooxygenase; part of the gene cluster that mediates the biosynthesis of radicicol, a resorcylic acid lactone (RAL) that irreversibly inhibits the HSP90 molecular chaperone, an important target for cancer chemotherapy. The radicicol cluster encodes only two apparent post-PKS enzymes, a cytochrome P450 monooxygenase (rdc4) and a non-heme halogenase (rdc2) that could introduce the epoxide and the chlorine, respectively. If this cluster includes all the genes required for radicicol biosynthesis, the remaining structural features of radicicol are presumably generated by the PKSs rdc1 and rdc5. The C-2' ketone could arise if the R-PKS rdc5 and NR-PKS rdc1 each carry out four iterations, in contrast to the five iteration-three iteration split for the hypothemycin PKSs. The origin of the cis 5',6' double bond is not known. The radicicol R-PKS rdc5 ER domain may catalyze either double bond isomerization or reduction in the third iteration. The polypeptide is Cytochrome P450 monooxygenase rdc4 (Metacordyceps chlamydosporia (Nematophagous fungus)).